A 389-amino-acid polypeptide reads, in one-letter code: Tryptophan synthase beta chain (389 aa).

Lys84 is modified (N6-(pyridoxal phosphate)lysine).

It belongs to the TrpB family. Tetramer of two alpha and two beta chains. Pyridoxal 5'-phosphate is required as a cofactor.

The catalysed reaction is (1S,2R)-1-C-(indol-3-yl)glycerol 3-phosphate + L-serine = D-glyceraldehyde 3-phosphate + L-tryptophan + H2O. Its pathway is amino-acid biosynthesis; L-tryptophan biosynthesis; L-tryptophan from chorismate: step 5/5. Its function is as follows. The beta subunit is responsible for the synthesis of L-tryptophan from indole and L-serine. The polypeptide is Tryptophan synthase beta chain (Clostridium novyi (strain NT)).